Here is a 420-residue protein sequence, read N- to C-terminus: ATP phosphoribosyltransferase regulatory subunit (420 aa).

This sequence belongs to the class-II aminoacyl-tRNA synthetase family. HisZ subfamily. In terms of assembly, heteromultimer composed of HisG and HisZ subunits.

The protein localises to the cytoplasm. It participates in amino-acid biosynthesis; L-histidine biosynthesis; L-histidine from 5-phospho-alpha-D-ribose 1-diphosphate: step 1/9. In terms of biological role, required for the first step of histidine biosynthesis. May allow the feedback regulation of ATP phosphoribosyltransferase activity by histidine. This Bacillus cereus (strain B4264) protein is ATP phosphoribosyltransferase regulatory subunit.